The sequence spans 704 residues: Elongation factor G 2 (704 aa).

Residues 8–290 (ERYRNIGISA…AIIDYLPSPV (283 aa)) form the tr-type G domain. Residues 17–24 (AHIDAGKT), 88–92 (DTPGH), and 142–145 (NKMD) contribute to the GTP site.

Belongs to the TRAFAC class translation factor GTPase superfamily. Classic translation factor GTPase family. EF-G/EF-2 subfamily.

Its subcellular location is the cytoplasm. Functionally, catalyzes the GTP-dependent ribosomal translocation step during translation elongation. During this step, the ribosome changes from the pre-translocational (PRE) to the post-translocational (POST) state as the newly formed A-site-bound peptidyl-tRNA and P-site-bound deacylated tRNA move to the P and E sites, respectively. Catalyzes the coordinated movement of the two tRNA molecules, the mRNA and conformational changes in the ribosome. The protein is Elongation factor G 2 of Polaromonas sp. (strain JS666 / ATCC BAA-500).